An 895-amino-acid chain; its full sequence is Probable inorganic carbon transporter subunit DabA 1 (895 aa).

Cys398, Asp400, His581, and Cys596 together coordinate Zn(2+).

This sequence belongs to the inorganic carbon transporter (TC 9.A.2) DabA family. As to quaternary structure, forms a complex with DabB. Zn(2+) is required as a cofactor.

The protein localises to the cell inner membrane. Part of an energy-coupled inorganic carbon pump. The polypeptide is Probable inorganic carbon transporter subunit DabA 1 (Rhodopirellula baltica (strain DSM 10527 / NCIMB 13988 / SH1)).